We begin with the raw amino-acid sequence, 175 residues long: MQHLKNIKSGNPKTKEQYQLTKNFDVIWLWSEDGKNWYEEVKNFQPDTIKIVYDENNIIVAITRDASTLNPEGFSVVEVPDITSNRRADDSGKWMFKDGAVVKRIYTADEQQQQAESQKAALLSEAENVIQPLERAVRLNMATDEERARLESWERYSVLVSRVDPANPEWPEMPQ.

Belongs to the tfa family.

Its function is as follows. Acts catalytically in the formation of tail protein dimers. The chain is Probable tail fiber assembly protein (G) from Escherichia phage P2 (Bacteriophage P2).